The primary structure comprises 583 residues: Ras-specific guanine nucleotide-releasing factor RalGPS2 (583 aa).

One can recognise a Ras-GEF domain in the interval 49–287; sequence TPEEYAGQIT…YKLSLKIEPG (239 aa). A disordered region spans residues 283–314; the sequence is KIEPGTSTPRSAASREDLVGPEVGASPQSGRK. S293, S296, S308, and S311 each carry phosphoserine. The short motif at 324 to 327 is the PXXP element; sequence PQTP. T326 carries the post-translational modification Phosphothreonine. Residues S329 and S343 each carry the phosphoserine modification. T361 is modified (phosphothreonine). A disordered region spans residues 372–406; sequence DDSVMEPHAPSRGQAESSTLSSGISIGSSDGSELS. S374 carries the post-translational modification Phosphoserine. Over residues 387 to 403 the composition is skewed to low complexity; sequence ESSTLSSGISIGSSDGS. S422 is subject to Phosphoserine. The PH domain occupies 457-569; the sequence is AVTIQGVLRR…WFKHLSAACQ (113 aa). Residues 459–583 form a required for stimulation of nucleotide exchange by RALA region; it reads TIQGVLRRKT…QVPTNLMTFE (125 aa).

As to quaternary structure, interacts with the SH3 domains of GRB2 and PLCG1. Interacts with RALA.

The protein localises to the cytoplasm. It is found in the cell membrane. Guanine nucleotide exchange factor for the small GTPase RALA. May be involved in cytoskeletal organization. May also be involved in the stimulation of transcription in a Ras-independent fashion. In Homo sapiens (Human), this protein is Ras-specific guanine nucleotide-releasing factor RalGPS2 (RALGPS2).